The primary structure comprises 27 residues: M-ectatotoxin-Eb2a (27 aa).

Expressed by the venom gland.

Its subcellular location is the secreted. In terms of biological role, antimicrobial peptide forming an alpha-helix in watery and membraneous environments, enabling it to perforate membranes. Active against Gram-negative bacteria E.coli DH5alpha (MIC=5 uM), E.coli MH1 (MIC=0.6 uM) and P.aeruginosa PAO1 (MIC=10 uM) and against Gram-positive bacteria B.subtilis VKM B-501 (MIC=0.6 uM) and A.globiformis VKM Ac-1112 (MIC=0.2 uM). Has cytolytic and hemolytic activity. The chain is M-ectatotoxin-Eb2a from Ectatomma brunneum (Ant).